A 154-amino-acid polypeptide reads, in one-letter code: Transcriptional repressor NrdR (154 aa).

Residues Cys-3–Cys-34 fold into a zinc finger. Residues Pro-49 to Glu-139 form the ATP-cone domain.

The protein belongs to the NrdR family. Requires Zn(2+) as cofactor.

In terms of biological role, negatively regulates transcription of bacterial ribonucleotide reductase nrd genes and operons by binding to NrdR-boxes. This chain is Transcriptional repressor NrdR, found in Pseudomonas putida (strain ATCC 700007 / DSM 6899 / JCM 31910 / BCRC 17059 / LMG 24140 / F1).